The sequence spans 605 residues: Elongation factor 4 (605 aa).

Residues 9-192 (SRIRNFCIIA…AIIARVPAPA (184 aa)) enclose the tr-type G domain. Residues 21-26 (DHGKST) and 139-142 (NKID) contribute to the GTP site.

This sequence belongs to the TRAFAC class translation factor GTPase superfamily. Classic translation factor GTPase family. LepA subfamily.

The protein resides in the cell inner membrane. It catalyses the reaction GTP + H2O = GDP + phosphate + H(+). Required for accurate and efficient protein synthesis under certain stress conditions. May act as a fidelity factor of the translation reaction, by catalyzing a one-codon backward translocation of tRNAs on improperly translocated ribosomes. Back-translocation proceeds from a post-translocation (POST) complex to a pre-translocation (PRE) complex, thus giving elongation factor G a second chance to translocate the tRNAs correctly. Binds to ribosomes in a GTP-dependent manner. The polypeptide is Elongation factor 4 (Chlorobium luteolum (strain DSM 273 / BCRC 81028 / 2530) (Pelodictyon luteolum)).